Here is a 183-residue protein sequence, read N- to C-terminus: Transposon gamma-delta resolvase (183 aa).

Residues 2-137 (RLFGYARVST…EGRQEAMAKG (136 aa)) form the Resolvase/invertase-type recombinase catalytic domain. Catalysis depends on Ser10, which acts as the O-(5'-phospho-DNA)-serine intermediate. A DNA-binding region (H-T-H motif) is located at residues 161-180 (ASHISKTMNIARSTVYKVIN).

This sequence belongs to the site-specific recombinase resolvase family.

Its function is as follows. This protein catalyzes the site-specific recombination of the transposon and also regulates its frequency of transposition. The chain is Transposon gamma-delta resolvase (tnpR) from Escherichia coli (strain K12).